The following is a 171-amino-acid chain: MTGLLYLQNSSGYNDCYFKTESLVDFLYRTLFIDKGSYLGVSFITAAEMRDLKIKHFGVNEDSDVLSFPIDEIAPGSENSLVYGVLGDIVVCPETVMRQAVRHPFEHEIYLLVVHGFLHLLGFDHSDAPSKKEMFSLQAKLIEDFFALENLGTPSEEITITPDLRPSLGRI.

3 residues coordinate Zn(2+): His-115, His-119, and His-125.

Belongs to the endoribonuclease YbeY family. Zn(2+) serves as cofactor.

It is found in the cytoplasm. In terms of biological role, single strand-specific metallo-endoribonuclease involved in late-stage 70S ribosome quality control and in maturation of the 3' terminus of the 16S rRNA. In Tropheryma whipplei (strain TW08/27) (Whipple's bacillus), this protein is Endoribonuclease YbeY.